We begin with the raw amino-acid sequence, 742 residues long: Phosphoribosylformylglycinamidine synthase subunit PurL (742 aa).

The active site involves H54. ATP contacts are provided by Y57 and K96. E98 is a binding site for Mg(2+). Residues 99–102 (SHNH) and R121 each bind substrate. H100 functions as the Proton acceptor in the catalytic mechanism. Mg(2+) is bound at residue D122. A substrate-binding site is contributed by Q245. Residue D273 coordinates Mg(2+). Residue 317-319 (ESQ) coordinates substrate. ATP is bound by residues D500 and G537. Mg(2+) is bound at residue N538. A substrate-binding site is contributed by S540.

The protein belongs to the FGAMS family. In terms of assembly, monomer. Part of the FGAM synthase complex composed of 1 PurL, 1 PurQ and 2 PurS subunits.

It localises to the cytoplasm. It carries out the reaction N(2)-formyl-N(1)-(5-phospho-beta-D-ribosyl)glycinamide + L-glutamine + ATP + H2O = 2-formamido-N(1)-(5-O-phospho-beta-D-ribosyl)acetamidine + L-glutamate + ADP + phosphate + H(+). It functions in the pathway purine metabolism; IMP biosynthesis via de novo pathway; 5-amino-1-(5-phospho-D-ribosyl)imidazole from N(2)-formyl-N(1)-(5-phospho-D-ribosyl)glycinamide: step 1/2. In terms of biological role, part of the phosphoribosylformylglycinamidine synthase complex involved in the purines biosynthetic pathway. Catalyzes the ATP-dependent conversion of formylglycinamide ribonucleotide (FGAR) and glutamine to yield formylglycinamidine ribonucleotide (FGAM) and glutamate. The FGAM synthase complex is composed of three subunits. PurQ produces an ammonia molecule by converting glutamine to glutamate. PurL transfers the ammonia molecule to FGAR to form FGAM in an ATP-dependent manner. PurS interacts with PurQ and PurL and is thought to assist in the transfer of the ammonia molecule from PurQ to PurL. The protein is Phosphoribosylformylglycinamidine synthase subunit PurL of Bacillus velezensis (strain DSM 23117 / BGSC 10A6 / LMG 26770 / FZB42) (Bacillus amyloliquefaciens subsp. plantarum).